A 145-amino-acid polypeptide reads, in one-letter code: Alpha-amylase/trypsin inhibitor CM1 (145 aa).

Residues M1–A25 form the signal peptide.

Belongs to the protease inhibitor I6 (cereal trypsin/alpha-amylase inhibitor) family. As to quaternary structure, subunit of the tetrameric inhibitor. Endosperm.

Its subcellular location is the secreted. In terms of biological role, alpha-amylase/trypsin inhibitor. It could be involved in insect defense mechanisms. This is Alpha-amylase/trypsin inhibitor CM1 from Triticum aestivum (Wheat).